We begin with the raw amino-acid sequence, 214 residues long: uncharacterized protein (214 aa).

The next 2 membrane-spanning stretches (helical) occupy residues Ile-19 to Leu-39 and Leu-50 to Gly-70.

The protein resides in the cell membrane. This is an uncharacterized protein from Methanocaldococcus jannaschii (strain ATCC 43067 / DSM 2661 / JAL-1 / JCM 10045 / NBRC 100440) (Methanococcus jannaschii).